Consider the following 735-residue polypeptide: Peroxisomal multifunctional enzyme type 2 (735 aa).

Positions M1 to E305 are (3R)-hydroxyacyl-CoA dehydrogenase. NAD(+) contacts are provided by residues G16–D40, L21, and D40. K46 carries the post-translational modification N6-acetyllysine; alternate. K46 carries the post-translational modification N6-succinyllysine; alternate. S52 bears the Phosphoserine mark. N6-succinyllysine is present on residues K57 and K68. Residue S75–V76 coordinates NAD(+). An N6-succinyllysine modification is found at K84. Residue N99 coordinates NAD(+). Residue S151 participates in substrate binding. The active-site Proton acceptor is the Y164. NAD(+) is bound by residues Y164–K168 and A196–R199. T265 carries the phosphothreonine modification. At K275 the chain carries N6-succinyllysine. Residues S304 and S308 each carry the phosphoserine modification. An enoyl-CoA hydratase 2 region spans residues S321–L621. Position 355 is an N6-succinyllysine (K355). Position 405 to 406 (H405 to G406) interacts with (3R)-3-hydroxydecanoyl-CoA. The residue at position 423 (K423) is an N6-succinyllysine. Residues K434, D509–H514, G532, and F562 contribute to the (3R)-3-hydroxydecanoyl-CoA site. Positions V483–N599 constitute a MaoC-like domain. Residue K564 is modified to N6-acetyllysine. Residues K578 and K662 each carry the N6-succinyllysine modification. The SCP2 domain maps to S623–L735. The residue at position 668 (K668) is an N6-acetyllysine. Positions 705 and 723 each coordinate substrate. K724 is subject to N6-succinyllysine. Residues A733–L735 carry the Microbody targeting signal motif.

This sequence belongs to the short-chain dehydrogenases/reductases (SDR) family. As to quaternary structure, homodimer.

It is found in the peroxisome. The enzyme catalyses a (3R)-3-hydroxyacyl-CoA + NAD(+) = a 3-oxoacyl-CoA + NADH + H(+). The catalysed reaction is (24R,25R)-3alpha,7alpha,12alpha,24-tetrahydroxy-5beta-cholestan-26-oyl-CoA = (24E)-3alpha,7alpha,12alpha-trihydroxy-5beta-cholest-24-en-26-oyl-CoA + H2O. It catalyses the reaction a (3R)-3-hydroxyacyl-CoA = a (2E)-enoyl-CoA + H2O. It carries out the reaction (2E)-octenoyl-CoA + H2O = (3R)-hydroxyoctanoyl-CoA. The enzyme catalyses (3R)-hydroxyoctanoyl-CoA + NAD(+) = 3-oxooctanoyl-CoA + NADH + H(+). The catalysed reaction is (3R)-hydroxyhexadecanoyl-CoA + NAD(+) = 3-oxohexadecanoyl-CoA + NADH + H(+). It catalyses the reaction (2E)-hexadecenedioyl-CoA + H2O = (3R)-hydroxyhexadecanedioyl-CoA. It carries out the reaction (3R)-hydroxyhexadecanedioyl-CoA + NAD(+) = 3-oxohexadecanedioyl-CoA + NADH + H(+). The enzyme catalyses (3R)-hydroxyhexadecanoyl-CoA = (2E)-hexadecenoyl-CoA + H2O. The catalysed reaction is (3R)-3-hydroxydecanoyl-CoA = (2E)-decenoyl-CoA + H2O. It catalyses the reaction (3R)-3-hydroxydecanoyl-CoA + NAD(+) = 3-oxodecanoyl-CoA + NADH + H(+). It carries out the reaction (24R,25R)-3alpha,7alpha,12alpha,24-tetrahydroxy-5beta-cholestan-26-oyl-CoA + NAD(+) = 3alpha,7alpha,12alpha-trihydroxy-24-oxo-5beta-cholestan-26-oyl-CoA + NADH + H(+). It participates in lipid metabolism; fatty acid beta-oxidation. Its function is as follows. Bifunctional enzyme acting on the peroxisomal fatty acid beta-oxidation pathway. Catalyzes two of the four reactions in fatty acid degradation: hydration of 2-enoyl-CoA (trans-2-enoyl-CoA) to produce (3R)-3-hydroxyacyl-CoA, and dehydrogenation of (3R)-3-hydroxyacyl-CoA to produce 3-ketoacyl-CoA (3-oxoacyl-CoA), which is further metabolized by SCPx. Can use straight-chain and branched-chain fatty acids, as well as bile acid intermediates as substrates. The chain is Peroxisomal multifunctional enzyme type 2 from Rattus norvegicus (Rat).